Here is a 464-residue protein sequence, read N- to C-terminus: 3-isopropylmalate dehydratase large subunit (464 aa).

[4Fe-4S] cluster is bound by residues cysteine 337, cysteine 397, and cysteine 400.

Belongs to the aconitase/IPM isomerase family. LeuC type 1 subfamily. As to quaternary structure, heterodimer of LeuC and LeuD. The cofactor is [4Fe-4S] cluster.

It carries out the reaction (2R,3S)-3-isopropylmalate = (2S)-2-isopropylmalate. It participates in amino-acid biosynthesis; L-leucine biosynthesis; L-leucine from 3-methyl-2-oxobutanoate: step 2/4. Catalyzes the isomerization between 2-isopropylmalate and 3-isopropylmalate, via the formation of 2-isopropylmaleate. This chain is 3-isopropylmalate dehydratase large subunit, found in Bacillus anthracis (strain A0248).